The sequence spans 136 residues: Holo-[acyl-carrier-protein] synthase (136 aa).

Residues Asp8 and Glu57 each coordinate Mg(2+).

The protein belongs to the P-Pant transferase superfamily. AcpS family. It depends on Mg(2+) as a cofactor.

It localises to the cytoplasm. It catalyses the reaction apo-[ACP] + CoA = holo-[ACP] + adenosine 3',5'-bisphosphate + H(+). In terms of biological role, transfers the 4'-phosphopantetheine moiety from coenzyme A to a Ser of acyl-carrier-protein. This is Holo-[acyl-carrier-protein] synthase from Methylobacterium radiotolerans (strain ATCC 27329 / DSM 1819 / JCM 2831 / NBRC 15690 / NCIMB 10815 / 0-1).